The primary structure comprises 202 residues: CASP-like protein 2B1 (202 aa).

At 1–29 (MSYLGVGVSPGNVPVYHGSNLKVIDKRVR) the chain is on the cytoplasmic side. A helical membrane pass occupies residues 30 to 50 (LAELVLRCLICGLGVLAAVLV). Residues 51–72 (GTDTQVKEIFSIQKKARFTDMK) are Extracellular-facing. A helical membrane pass occupies residues 73 to 93 (ALVFLVIANGIAAAYSLLQGV). Residues 94-109 (RCVVGMVRGSALFSKP) are Cytoplasmic-facing. Residues 110 to 130 (LAWAIFSGDQMMAYLTVAAVA) traverse the membrane as a helical segment. At 131–164 (AAAQSAVFAKLGQPELQWMKICNMYGKFCNQVGE) the chain is on the extracellular side. The chain crosses the membrane as a helical span at residues 165–185 (GIASALLVSVSMVVLSCISAF). The Cytoplasmic portion of the chain corresponds to 186-202 (SLFRLYGANKGKDCTRW).

Belongs to the Casparian strip membrane proteins (CASP) family. Homodimer and heterodimers.

The protein localises to the cell membrane. The chain is CASP-like protein 2B1 from Ricinus communis (Castor bean).